The sequence spans 217 residues: LSM12 homolog A (217 aa).

The Sm domain occupies 9–78 (VNAVNDCFSI…CSNVQVIKEC (70 aa)). The AD domain occupies 86–184 (QKLNLEQVKM…IIKQFFNTRP (99 aa)). The interval 185-217 (SPVPESGAAASTSSPSVSPTSSSLASGSPVPAN) is disordered. Positions 190–217 (SGAAASTSSPSVSPTSSSLASGSPVPAN) are enriched in low complexity.

The protein belongs to the LSM12 family. In terms of assembly, component of the Atx2-tyf activator complex, composed of Atx2, tyf, pAbp, Lsm12a. Interacts with tyf, Atx2 and pAbp.

Functionally, component of the Atx2-tyf activator complex which functions in the circadian pacemaker neurons to activate the TYF-dependent translation of per and maintain 24 hour periodicity in circadian behaviors. Within the Atx2-tyf complex, likely to function as a molecular adapter which stabilizes the interaction between Atx2 and the translational regulator tyf. In Drosophila melanogaster (Fruit fly), this protein is LSM12 homolog A.